Reading from the N-terminus, the 239-residue chain is Lactate utilization protein A 1 (239 aa).

It belongs to the LutA/YkgE family.

Its function is as follows. Is involved in L-lactate degradation and allows cells to grow with lactate as the sole carbon source. The protein is Lactate utilization protein A 1 of Bacillus cereus (strain AH820).